A 357-amino-acid polypeptide reads, in one-letter code: DNA integrity scanning protein DisA (357 aa).

Residues 9-147 enclose the DAC domain; the sequence is DRKLLEILKT…DDIKYILRDS (139 aa). Residues Gly76, Leu94, and 107-111 each bind ATP; that span reads TRHRT.

Belongs to the DisA family. Homooctamer. The cofactor is Mg(2+).

The enzyme catalyses 2 ATP = 3',3'-c-di-AMP + 2 diphosphate. In terms of biological role, participates in a DNA-damage check-point that is active prior to asymmetric division when DNA is damaged. DisA forms globular foci that rapidly scan along the chromosomes during sporulation, searching for lesions. When a lesion is present, DisA pauses at the lesion site. This triggers a cellular response that culminates in a temporary block in sporulation initiation. Also has diadenylate cyclase activity, catalyzing the condensation of 2 ATP molecules into cyclic di-AMP (c-di-AMP). c-di-AMP acts as a signaling molecule that couples DNA integrity with progression of sporulation. The rise in c-di-AMP level generated by DisA while scanning the chromosome, operates as a positive signal that advances sporulation; upon encountering a lesion, the DisA focus arrests at the damaged site and halts c-di-AMP synthesis. This is DNA integrity scanning protein DisA from Clostridium acetobutylicum (strain ATCC 824 / DSM 792 / JCM 1419 / IAM 19013 / LMG 5710 / NBRC 13948 / NRRL B-527 / VKM B-1787 / 2291 / W).